We begin with the raw amino-acid sequence, 253 residues long: Imidazole glycerol phosphate synthase subunit HisF (253 aa).

Residues Asp-11 and Asp-130 contribute to the active site.

Belongs to the HisA/HisF family. Heterodimer of HisH and HisF.

Its subcellular location is the cytoplasm. The catalysed reaction is 5-[(5-phospho-1-deoxy-D-ribulos-1-ylimino)methylamino]-1-(5-phospho-beta-D-ribosyl)imidazole-4-carboxamide + L-glutamine = D-erythro-1-(imidazol-4-yl)glycerol 3-phosphate + 5-amino-1-(5-phospho-beta-D-ribosyl)imidazole-4-carboxamide + L-glutamate + H(+). It functions in the pathway amino-acid biosynthesis; L-histidine biosynthesis; L-histidine from 5-phospho-alpha-D-ribose 1-diphosphate: step 5/9. Its function is as follows. IGPS catalyzes the conversion of PRFAR and glutamine to IGP, AICAR and glutamate. The HisF subunit catalyzes the cyclization activity that produces IGP and AICAR from PRFAR using the ammonia provided by the HisH subunit. The sequence is that of Imidazole glycerol phosphate synthase subunit HisF from Caldanaerobacter subterraneus subsp. tengcongensis (strain DSM 15242 / JCM 11007 / NBRC 100824 / MB4) (Thermoanaerobacter tengcongensis).